A 179-amino-acid polypeptide reads, in one-letter code: Large ribosomal subunit protein uL5 (179 aa).

It belongs to the universal ribosomal protein uL5 family. In terms of assembly, part of the 50S ribosomal subunit; part of the 5S rRNA/L5/L18/L25 subcomplex. Contacts the 5S rRNA and the P site tRNA. Forms a bridge to the 30S subunit in the 70S ribosome.

In terms of biological role, this is one of the proteins that bind and probably mediate the attachment of the 5S RNA into the large ribosomal subunit, where it forms part of the central protuberance. In the 70S ribosome it contacts protein S13 of the 30S subunit (bridge B1b), connecting the 2 subunits; this bridge is implicated in subunit movement. Contacts the P site tRNA; the 5S rRNA and some of its associated proteins might help stabilize positioning of ribosome-bound tRNAs. This Carboxydothermus hydrogenoformans (strain ATCC BAA-161 / DSM 6008 / Z-2901) protein is Large ribosomal subunit protein uL5.